We begin with the raw amino-acid sequence, 667 residues long: Smc-like protein Sph2 (667 aa).

Coiled coils occupy residues Gly-153–Thr-295 and Gly-355–Ala-517.

It belongs to the Sph1/Sph2 family.

The protein localises to the cytoplasm. Functionally, may play a role in replication. The chain is Smc-like protein Sph2 (sph2) from Halobacterium salinarum (strain ATCC 29341 / DSM 671 / R1).